The sequence spans 245 residues: 14-3-3 protein zeta (245 aa).

This sequence belongs to the 14-3-3 family. As to quaternary structure, homodimer.

It localises to the cytoplasm. In terms of biological role, adapter protein implicated in the regulation of a large spectrum of both general and specialized signaling pathways. Binds to a large number of partners, usually by recognition of a phosphoserine or phosphothreonine motif. Binding generally results in the modulation of the activity of the binding partner. The polypeptide is 14-3-3 protein zeta (ywhaz) (Xenopus tropicalis (Western clawed frog)).